Reading from the N-terminus, the 405-residue chain is MPEPVAEPALNGLRLNLRIVSIVMFNFASYLTIGLPLAVLPGYVHDVMGFSAFWAGLVISLQYFATLLSRPHAGRYADLLGPKKIVVFGLCGCFLSGLGYLTAGLTASLPVISLLLLCLGRVILGIGQSFAGTGSTLWGVGVVGSLHIGRVISWNGIVTYGAMAMGAPLGVVFYHWGGLQALALIIMGVALVAILLAIPRPTVKASKGKPLPFRAVLGRVWLYGMALALASAGFGVIATFITLFYDAKGWDGAAFALTLFSCAFVGTRLLFPNGINRIGGLNVAMICFSVEIIGLLLVGVATMPWMAKIGVLLAGAGFSLVFPALGVVAVKAVPQQNQGAALATYTVFMDLSLGVTGPLAGLVMSWAGVPVIYLAAAGLVAIALLLTWRLKKRPPVEIPEAASSS.

12 helical membrane-spanning segments follow: residues 19–39, 47–67, 85–105, 107–127, 156–176, 178–198, 224–244, 252–272, 283–303, 309–329, 344–364, and 366–386; these read IVSI…PLAV, VMGF…FATL, IVVF…TAGL, ASLP…LGIG, GIVT…FYHW, GLQA…LLAI, GMAL…ITLF, GAAF…LLFP, VAMI…VATM, IGVL…GVVA, TYTV…GLVM, and WAGV…ALLL.

It belongs to the major facilitator superfamily. YhhS family.

It is found in the cell inner membrane. This is an uncharacterized protein from Escherichia coli O6:H1 (strain CFT073 / ATCC 700928 / UPEC).